Here is a 425-residue protein sequence, read N- to C-terminus: Serine--tRNA ligase (425 aa).

Thr-228–Glu-230 serves as a coordination point for L-serine. Arg-259–Glu-261 lines the ATP pocket. Glu-282 contributes to the L-serine binding site. Glu-346–Ser-349 is a binding site for ATP. An L-serine-binding site is contributed by Ser-382.

The protein belongs to the class-II aminoacyl-tRNA synthetase family. Type-1 seryl-tRNA synthetase subfamily. As to quaternary structure, homodimer. The tRNA molecule binds across the dimer.

It localises to the cytoplasm. It catalyses the reaction tRNA(Ser) + L-serine + ATP = L-seryl-tRNA(Ser) + AMP + diphosphate + H(+). The enzyme catalyses tRNA(Sec) + L-serine + ATP = L-seryl-tRNA(Sec) + AMP + diphosphate + H(+). Its pathway is aminoacyl-tRNA biosynthesis; selenocysteinyl-tRNA(Sec) biosynthesis; L-seryl-tRNA(Sec) from L-serine and tRNA(Sec): step 1/1. Functionally, catalyzes the attachment of serine to tRNA(Ser). Is also able to aminoacylate tRNA(Sec) with serine, to form the misacylated tRNA L-seryl-tRNA(Sec), which will be further converted into selenocysteinyl-tRNA(Sec). The chain is Serine--tRNA ligase from Rickettsia felis (strain ATCC VR-1525 / URRWXCal2) (Rickettsia azadi).